A 200-amino-acid chain; its full sequence is uncharacterized protein (200 aa).

Residues 104 to 124 (SNLLICFLFLCGLYHISVFTG) form a helical membrane-spanning segment.

It localises to the membrane. This is an uncharacterized protein from Escherichia coli (strain K12).